The chain runs to 576 residues: Acetylcholine receptor subunit alpha-like 2 (576 aa).

Residues 1 to 21 (MAPGCCTTRPRPIALLAHIWR) form the signal peptide. Over 22–261 (HCKPLCLLLV…FFNITLRRKT (240 aa)) the chain is Extracellular. An N-linked (GlcNAc...) asparagine glycan is attached at Asn-65. Intrachain disulfides connect Cys-169/Cys-183 and Cys-243/Cys-244. N-linked (GlcNAc...) asparagine glycosylation occurs at Asn-254. 3 helical membrane-spanning segments follow: residues 262–285 (LFYTVNLIIPCVGISYLSVLVFYL), 293–311 (IALCISILLSQTMFFLLIS), and 327–346 (YLLFTMLLVGLSVVITIIIL). At 347-526 (NIHYRKPSTH…WGFVAMVMDR (180 aa)) the chain is on the cytoplasmic side. The chain crosses the membrane as a helical span at residues 527-545 (LFLWLFMIASLVGTFVILG). Asn-570 is a glycosylation site (N-linked (GlcNAc...) asparagine).

This sequence belongs to the ligand-gated ion channel (TC 1.A.9) family. Acetylcholine receptor (TC 1.A.9.1) subfamily. In terms of tissue distribution, CNS in embryos.

The protein resides in the postsynaptic cell membrane. It is found in the cell membrane. Functionally, after binding acetylcholine, the AChR responds by an extensive change in conformation that affects all subunits and leads to opening of an ion-conducting channel across the plasma membrane. The protein is Acetylcholine receptor subunit alpha-like 2 (nAChRalpha2) of Drosophila melanogaster (Fruit fly).